A 312-amino-acid polypeptide reads, in one-letter code: Protein atonal (312 aa).

2 disordered regions span residues Ser-136–Ala-174 and Asn-220–Ile-248. Positions Pro-162–Ala-174 are enriched in low complexity. The bHLH domain occupies Lys-255–Leu-307.

As to quaternary structure, efficient DNA binding requires dimerization with another bHLH protein. Forms a heterodimer with Daughterless. As to expression, proneural clusters and sense organ precursors of the chordotonal organs, optic furrow of the eye-antennal disk and developing brain lobe.

The protein localises to the nucleus. Its function is as follows. Developmental protein involved in neurogenesis. Required for the formation of chordotonal organs and photoreceptors. Seems to bind to E boxes. Specifically required for the photoreceptor R8 selection. The polypeptide is Protein atonal (ato) (Drosophila melanogaster (Fruit fly)).